The sequence spans 402 residues: Cysteine desulfurase NifS (402 aa).

Pyridoxal 5'-phosphate is bound by residues 72 to 73 (GT), asparagine 151, glutamine 179, and 199 to 201 (CGH). At lysine 202 the chain carries N6-(pyridoxal phosphate)lysine. Threonine 237 is a pyridoxal 5'-phosphate binding site. The active-site Cysteine persulfide intermediate is the cysteine 325. A [2Fe-2S] cluster-binding site is contributed by cysteine 325.

Belongs to the class-V pyridoxal-phosphate-dependent aminotransferase family. NifS/IscS subfamily. In terms of assembly, homodimer. The cofactor is pyridoxal 5'-phosphate.

The catalysed reaction is (sulfur carrier)-H + L-cysteine = (sulfur carrier)-SH + L-alanine. Its activity is regulated as follows. Inhibited by equimolar concentrations of p-chloromercuribenzoic acid, iodoacetamide or N-ethylmaleimide. In terms of biological role, catalyzes the removal of elemental sulfur atoms from cysteine to produce alanine. Seems to participate in the biosynthesis of the nitrogenase metalloclusters by providing the inorganic sulfur required for the Fe-S core formation. The polypeptide is Cysteine desulfurase NifS (Azotobacter vinelandii).